The sequence spans 285 residues: Ribosomal protein L11 methyltransferase (285 aa).

4 residues coordinate S-adenosyl-L-methionine: threonine 131, glycine 154, aspartate 176, and asparagine 223.

It belongs to the methyltransferase superfamily. PrmA family.

Its subcellular location is the cytoplasm. It carries out the reaction L-lysyl-[protein] + 3 S-adenosyl-L-methionine = N(6),N(6),N(6)-trimethyl-L-lysyl-[protein] + 3 S-adenosyl-L-homocysteine + 3 H(+). Functionally, methylates ribosomal protein L11. The sequence is that of Ribosomal protein L11 methyltransferase from Brucella suis (strain ATCC 23445 / NCTC 10510).